Consider the following 278-residue polypeptide: Thiazole synthase (278 aa).

K109 functions as the Schiff-base intermediate with DXP in the catalytic mechanism. 1-deoxy-D-xylulose 5-phosphate contacts are provided by residues G170, 197-198 (AG), and 219-220 (NT).

The protein belongs to the ThiG family. Homotetramer. Forms heterodimers with either ThiH or ThiS.

The protein resides in the cytoplasm. The enzyme catalyses [ThiS sulfur-carrier protein]-C-terminal-Gly-aminoethanethioate + 2-iminoacetate + 1-deoxy-D-xylulose 5-phosphate = [ThiS sulfur-carrier protein]-C-terminal Gly-Gly + 2-[(2R,5Z)-2-carboxy-4-methylthiazol-5(2H)-ylidene]ethyl phosphate + 2 H2O + H(+). The protein operates within cofactor biosynthesis; thiamine diphosphate biosynthesis. In terms of biological role, catalyzes the rearrangement of 1-deoxy-D-xylulose 5-phosphate (DXP) to produce the thiazole phosphate moiety of thiamine. Sulfur is provided by the thiocarboxylate moiety of the carrier protein ThiS. In vitro, sulfur can be provided by H(2)S. This chain is Thiazole synthase, found in Cupriavidus taiwanensis (strain DSM 17343 / BCRC 17206 / CCUG 44338 / CIP 107171 / LMG 19424 / R1) (Ralstonia taiwanensis (strain LMG 19424)).